Reading from the N-terminus, the 486-residue chain is MTKEVRVRYAPSPTGFLHIGGARTALFNYLYAKHHNGKFIVRIEDTDIERNVEGGEASQLDNLKWLGIEYDESIDIGGPYAPYRQMERLDIYKEHAEKLLAQGAAYKCFCSSEKLEASREEQKARGVAAPTYDGTCRHLSAEEVAAKEAAGEPYTIRMRVPENVTYDFEDLVRGQVTFESKDIGDWVIVKANGIPTYNYAVVLDDHFMEISHVFRGEEHLSNTPKQMMIFDAFGWEYPRFGHMTLIINENRKKLSKRDESIIQFVTQYKDLGYLPEAMFNFFALLGWSPEGEEEIFSKEEFIKIFDEKRLSKSPSMFDKQKLTWMNNQYIKKLSLEEVVALSLPHLQKAGLLPDELSAVQHAWATDLIGLYHDQMSFGAEIVELSSLFFKDHIEYDEEAKAVLAGEQVPEVMAAFKAQLEELEEFTPDAVKAAIKAVQKATGHKGKNLFMPIRVVTTGETHGPELPNAICLIGKEKAIDRVEKFAQ.

A 'HIGH' region motif is present at residues 11–21 (PSPTGFLHIGG). Residues C108, C110, C136, and H138 each coordinate Zn(2+). The 'KMSKS' region signature appears at 253 to 257 (KLSKR). K256 is an ATP binding site.

The protein belongs to the class-I aminoacyl-tRNA synthetase family. Glutamate--tRNA ligase type 1 subfamily. In terms of assembly, monomer. Zn(2+) is required as a cofactor.

Its subcellular location is the cytoplasm. The enzyme catalyses tRNA(Glu) + L-glutamate + ATP = L-glutamyl-tRNA(Glu) + AMP + diphosphate. Its function is as follows. Catalyzes the attachment of glutamate to tRNA(Glu) in a two-step reaction: glutamate is first activated by ATP to form Glu-AMP and then transferred to the acceptor end of tRNA(Glu). The chain is Glutamate--tRNA ligase from Lysinibacillus sphaericus (strain C3-41).